A 170-amino-acid chain; its full sequence is Cathelicidin antimicrobial peptide (170 aa).

The first 30 residues, 1–30, serve as a signal peptide directing secretion; that stretch reads MKTQRDSPSLGRWSLVLLLLGLVMPLAIVA. Residues 31–131 constitute a propeptide, cathelin-like domain (CLD); that stretch reads QVLSYQEAVL…DISCDKDNRR (101 aa). 2 disulfides stabilise this stretch: Cys-86/Cys-97 and Cys-108/Cys-125. The active core stretch occupies residues 150–162; sequence LKKVGQKIKDFLG.

This sequence belongs to the cathelicidin family. Monomer, homodimer or homotrimer (in vitro). Oligomerizes as tetra- or hexamer in solution (in vitro). In terms of processing, proteolytically cleaved by proteinase PRTN3 into antibacterial peptide LL-37. Proteolytically cleaved by cathepsin CTSG and neutrophil elastase ELANE. Resistant to proteolytic degradation in solution, and when bound to both zwitterionic (mimicking mammalian membranes) and negatively charged membranes (mimicking bacterial membranes). Post-translationally, after secretion onto the skin surface, the CAMP gene product is processed by a serine protease-dependent mechanism into multiple novel antimicrobial peptides distinct from and shorter than cathelicidin LL-37. These peptides show enhanced antimicrobial action, acquiring the ability to kill skin pathogens such as S.aureus, E.coli and C.albicans. These peptides have lost the ability to stimulate CXCL8/IL8 release from keratinocytes. The peptides act synergistically, killing bacteria at lower concentrations when present together, and maintain activity at increased salt condition.

It localises to the secreted. The protein localises to the vesicle. Antimicrobial protein that is an integral component of the innate immune system. Binds to bacterial lipopolysaccharides (LPS). Acts via neutrophil N-formyl peptide receptors to enhance the release of CXCL2. Postsecretory processing generates multiple cathelicidin antimicrobial peptides with various lengths which act as a topical antimicrobial defense in sweat on skin. The unprocessed precursor form, cathelicidin antimicrobial peptide, inhibits the growth of Gram-negative E.coli and E.aerogenes with efficiencies comparable to that of the mature peptide LL-37 (in vitro). Functionally, antimicrobial peptide that is an integral component of the innate immune system. Binds to bacterial lipopolysaccharides (LPS). Causes membrane permeabilization by forming transmembrane pores (in vitro). Causes lysis of E.coli. Exhibits antimicrobial activity against Gram-negative bacteria such as P.aeruginosa, S.typhimurium, E.aerogenes, E.coli and P.syringae, Gram-positive bacteria such as L.monocytogenes, S.epidermidis, S.pyogenes and S.aureus, as well as vancomycin-resistant enterococci (in vitro). Exhibits antimicrobial activity against methicillin-resistant S.aureus, P.mirabilis, and C.albicans in low-salt media, but not in media containing 100 mM NaCl (in vitro). Forms chiral supramolecular assemblies with quinolone signal (PQS) molecules of P.aeruginosa, which may lead to interference of bacterial quorum signaling and perturbance of bacterial biofilm formation. May form supramolecular fiber-like assemblies on bacterial membranes. Induces cytokine and chemokine producation as well as TNF/TNFA and CSF2/GMCSF production in normal human keratinocytes. Exhibits hemolytic activity against red blood cells. Its function is as follows. Exhibits antimicrobial activity against E.coli and B.megaterium (in vitro). This is Cathelicidin antimicrobial peptide from Macaca fascicularis (Crab-eating macaque).